The following is a 561-amino-acid chain: DNA mismatch repair protein MutL (561 aa).

The protein belongs to the DNA mismatch repair MutL/HexB family.

This protein is involved in the repair of mismatches in DNA. It is required for dam-dependent methyl-directed DNA mismatch repair. May act as a 'molecular matchmaker', a protein that promotes the formation of a stable complex between two or more DNA-binding proteins in an ATP-dependent manner without itself being part of a final effector complex. The polypeptide is DNA mismatch repair protein MutL (Rippkaea orientalis (strain PCC 8801 / RF-1) (Cyanothece sp. (strain PCC 8801))).